The sequence spans 233 residues: Snake venom serine protease ussurase (233 aa).

Positions 1-224 constitute a Peptidase S1 domain; that stretch reads VIGGVECNIN…YTDWIQSIIS (224 aa). Intrachain disulfides connect cysteine 7-cysteine 138, cysteine 25-cysteine 41, cysteine 73-cysteine 231, cysteine 117-cysteine 185, cysteine 149-cysteine 164, and cysteine 175-cysteine 200. Residue histidine 40 is the Charge relay system of the active site. N-linked (GlcNAc...) asparagine glycosylation is present at asparagine 54. Aspartate 85 functions as the Charge relay system in the catalytic mechanism. Serine 179 (charge relay system) is an active-site residue.

This sequence belongs to the peptidase S1 family. Snake venom subfamily. As to quaternary structure, monomer. As to expression, expressed by the venom gland.

It is found in the secreted. Snake venom serine protease that may act in the hemostasis system of the prey. The sequence is that of Snake venom serine protease ussurase from Gloydius ussuriensis (Ussuri mamushi).